The following is a 269-amino-acid chain: Regulatory protein RecX (269 aa).

The protein belongs to the RecX family.

Its subcellular location is the cytoplasm. In terms of biological role, modulates RecA activity. This Listeria monocytogenes serotype 4a (strain HCC23) protein is Regulatory protein RecX.